Here is a 3258-residue protein sequence, read N- to C-terminus: Protein unc-80 homolog (3258 aa).

A disordered region spans residues 152 to 173 (VENQGSPGQPCQSSSNDEEENN). The span at 155–166 (QGSPGQPCQSSS) shows a compositional bias: low complexity. The residue at position 257 (Ser257) is a Phosphoserine. Disordered regions lie at residues 291-316 (RGNS…RASL), 449-468 (RKED…GKRR), 522-560 (RRGS…HGEN), 697-717 (KKSE…GAFQ), 732-784 (PAVS…TPVS), 963-1019 (PGKK…EQMQ), 1034-1076 (KSQS…ISLR), 1404-1447 (EDSK…MSNA), and 1817-1836 (AVSA…HHVP). A compositionally biased stretch (polar residues) spans 295-307 (FDGSLSSQTSQER). Ser525 is modified (phosphoserine). The segment covering 698-712 (KSENKENETLEKRPS) has biased composition (basic and acidic residues). Gly residues predominate over residues 732–767 (PAVSGAGDGGGEEGGGGDGGGGGGDGGGGGGGGGGP). Basic and acidic residues-rich tracts occupy residues 769–780 (EKNDKNQEKDES) and 965–974 (KKVEENEQES). Residues 1035-1052 (SQSAASDTSSQSEQDTSE) show a composition bias toward low complexity. A compositionally biased stretch (basic residues) spans 1066–1076 (ARSRSRRISLR). Residues 1417–1429 (LKSDAGVEEKKEG) show a composition bias toward basic and acidic residues. The next 4 helical transmembrane spans lie at 2268–2288 (PFVL…DAAN), 2398–2418 (IAAT…VEVL), 2785–2805 (GLAE…LVCF), and 2831–2851 (LALW…FVLL). A compositionally biased stretch (polar residues) spans 2942 to 2964 (NTGTGTVWEQDSEPSQQASQDTL). Residues 2942–2982 (NTGTGTVWEQDSEPSQQASQDTLSRTDEEDEENDSISMPSV) are disordered. Residue Ser3042 is modified to Phosphoserine. A disordered region spans residues 3051-3213 (NLLVQQPLGR…DDFTGLETSS (163 aa)). Positions 3059–3068 (GRKRGLRQLR) are enriched in basic residues. Residues 3088–3100 (RLSTTRRSIQPKT) show a composition bias toward polar residues. Over residues 3117-3129 (PEPAAAPTDALPA) the composition is skewed to low complexity. Positions 3175–3186 (PTEEGEKEEDTE) are enriched in acidic residues.

This sequence belongs to the unc-80 family. NALCN complex consists of NALCN and auxiliary subunits, UNC79, UNC80 and NACL1. These auxiliary subunits are essential for the NALCN complex function. Interacts (via N-terminus half) with NALCN; this interaction facilitates NALCN surface localization. Interacts with UNC79. UNC80 bridges NALCN to UNC79. Post-translationally, phosphorylated on tyrosine residues. In terms of tissue distribution, moderately expressed in fetal brain, spinal cord, skeletal muscle, thymus, spleen, fetal liver, small intestine, colon, kidney and uterus. Highly expressed in adrenal gland, prostate and testis, as well as in brain and cerebellum.

It localises to the cell membrane. Its function is as follows. Auxiliary subunit of the NALCN sodium channel complex, a voltage-gated ion channel responsible for the resting Na(+) permeability that controls neuronal excitability. Activated by neuropeptides substance P, neurotensin, and extracellular Ca(2+) that regulates neuronal excitability by controlling the sizes of NALCN-dependent sodium-leak current. UNC80 is essential for NALCN sensitivity to extracellular Ca(2+). This chain is Protein unc-80 homolog, found in Homo sapiens (Human).